Consider the following 124-residue polypeptide: Large ribosomal subunit protein uL18 (124 aa).

It belongs to the universal ribosomal protein uL18 family. Part of the 50S ribosomal subunit; part of the 5S rRNA/L5/L18/L25 subcomplex. Contacts the 5S and 23S rRNAs.

In terms of biological role, this is one of the proteins that bind and probably mediate the attachment of the 5S RNA into the large ribosomal subunit, where it forms part of the central protuberance. The protein is Large ribosomal subunit protein uL18 of Koribacter versatilis (strain Ellin345).